A 228-amino-acid chain; its full sequence is 7-cyano-7-deazaguanine synthase (228 aa).

16 to 26 serves as a coordination point for ATP; the sequence is FSGGQDSTTCL. Zn(2+)-binding residues include cysteine 193, cysteine 201, cysteine 204, and cysteine 207.

The protein belongs to the QueC family. Zn(2+) is required as a cofactor.

The catalysed reaction is 7-carboxy-7-deazaguanine + NH4(+) + ATP = 7-cyano-7-deazaguanine + ADP + phosphate + H2O + H(+). The protein operates within purine metabolism; 7-cyano-7-deazaguanine biosynthesis. In terms of biological role, catalyzes the ATP-dependent conversion of 7-carboxy-7-deazaguanine (CDG) to 7-cyano-7-deazaguanine (preQ(0)). In Pasteurella multocida (strain Pm70), this protein is 7-cyano-7-deazaguanine synthase.